Consider the following 600-residue polypeptide: Proton channel OTOP1 (600 aa).

Residues 1 to 50 are disordered; the sequence is MPGGPGAPSSPAASSGSSRAAPSGIAACPLSPPPLARGSPQASGPRRGAS. The Cytoplasmic portion of the chain corresponds to 1–56; it reads MPGGPGAPSSPAASSGSSRAAPSGIAACPLSPPPLARGSPQASGPRRGASVPQKLA. A compositionally biased stretch (low complexity) spans 7-27; it reads APSSPAASSGSSRAAPSGIAA. The chain crosses the membrane as a helical span at residues 57–78; it reads ETLSSQYGLNVFVAGLLFLLAW. At 79–86 the chain is on the extracellular side; it reads AVHATGVG. A helical transmembrane segment spans residues 87 to 110; that stretch reads KSDLLCVLTALMLLQLLWMLWYVG. Residues 111 to 128 lie on the Cytoplasmic side of the membrane; sequence RSYMQRRLIRPKDTHAGA. Residues 129–151 traverse the membrane as a helical segment; sequence RWLRGSITLFAFITVVLGCLKVA. Residues 152-161 lie on the Extracellular side of the membrane; that stretch reads YFIGFSECLS. A helical transmembrane segment spans residues 162-186; it reads ATEGVFPVTHAVHTLLQVYFLWGHA. Topologically, residues 187-194 are cytoplasmic; the sequence is KDIIMSFK. A helical membrane pass occupies residues 195–217; sequence TLERFGVIHSVFTNLLLWANSVL. The Extracellular segment spans residues 218–262; that stretch reads NESKHQLNEHKERLITLGFGNITIVLDDHTPQCNCTPPALCSALS. A helical transmembrane segment spans residues 263–288; it reads HGIYYLYPFNIEYQILASTMLYVLWK. The Cytoplasmic segment spans residues 289-309; it reads NIGRRVDSSQHQKMQCRFDGV. A helical membrane pass occupies residues 310-332; the sequence is LVGSVLGLTVLAATIAVVVVYMI. Residues 333–342 lie on the Extracellular side of the membrane; sequence HIGRSKSKSE. Residues 343–368 form a helical membrane-spanning segment; that stretch reads SALIMFYLYAITVLLLMGAAGLVGSW. Residues 369–386 are Cytoplasmic-facing; sequence IYRVDEKSLDESKNPARK. A helical membrane pass occupies residues 387-411; the sequence is LDVDLLVATGSGSWLLSWGSILAIA. Residues 412 to 421 lie on the Extracellular side of the membrane; it reads CAETRPPYTW. A helical transmembrane segment spans residues 422–442; sequence YNLPYSVLVIVEKYVQNIFII. The Cytoplasmic portion of the chain corresponds to 443–532; that stretch reads ESVHLEPEGV…QGGMKRRLLR (90 aa). The helical transmembrane segment at 533-551 threads the bilayer; the sequence is NITAFLFLCNISLWIPPAF. The Extracellular portion of the chain corresponds to 552 to 569; that stretch reads GCRPEYDNGLEEIVFGFE. Residues 570 to 593 traverse the membrane as a helical segment; sequence PWIIVVNLAMPFSIFYRMHAAAAL. At 594-600 the chain is on the cytoplasmic side; that stretch reads FEVYCKI.

The protein belongs to the otopetrin family. As to quaternary structure, homodimer. Interacts with STAT1, independently of STAT1 phosphorylation status. Expressed in thymus, heart, kidney, skin, vestibular system of the inner ear, sour taste cells, heart, uterus, dorsal root ganglion, adrenal gland, lactating mammary gland and stimulated mast cells. In the inner ear, expressed in the supporting cells in extrastriolar regions of the saccule and in the utricle, but not in the cochlea. Expressed in brown adipose tissue. Expressed in epididymal white adipose tissue (eWAT), as well as in inguinal fat, in obese animals, but hardly detectable in eWAT from lean mice. Expressed in acid-sensing taste receptor cells (PKD2L1-positive cells), but not in other types of taste cells (at protein level).

It localises to the cell membrane. The protein localises to the cell projection. Its subcellular location is the microvillus. The enzyme catalyses H(+)(in) = H(+)(out). With respect to regulation, activated by both acid and alkali, with proton influx in response to extracellular acid and proton efflux during alkali stimulation. Inhibited by Zn(2+); this inhibition is thought to be pH-sensitive. Currents evoked in response to mild acid (pH 6.0) stimulus may also be mildly potentiated by exposure to Zn(2+). Activated by NH(4)Cl. Functionally, proton-selective ion channel. Biphasically modulated by acid and alkali, mediating proton influx and efflux in response to extracellular acid and base stimulation, respectively. Sour taste receptor, which carries inward currents in response to extracellular acidification. Sensor for ammonium chloride (NH(4)Cl) in taste receptor cells. NH(4)Cl acts by increasing the intracellular pH, thereby generating a driving force for proton entry through OTOP1 channel. Might also participate in alkaline sensation. Plays a role in the regulation of Ca(2+) flux in response to purigenic (ATP, ADP and UDP) stimuli, leading to increase in cytosolic Ca(2+) due to influx of extracellular calcium. May play this role by inhibiting P2Y purinoceptor-mediated Ca(2+) release in a Ca(2+)-dependent manner and promote an influx of Ca(2+) in response to ATP. Through this mechanism and possibly others, plays a role in the formation and function of calcium carbonate-based structures in the vestibular system of the inner ear, called otoconia, that sense gravity and linear acceleration. In obesity, may attenuate adipose tissue inflammation, through the negative regulation of IFNG signaling, hence may play an adaptive role in the maintainance of metabolic homeostasis. Following alkali activation, may also be permeable Na(+), K(+), Cs(+) and Li(+). This is Proton channel OTOP1 from Mus musculus (Mouse).